A 258-amino-acid polypeptide reads, in one-letter code: Regulatory protein RecX (258 aa).

Belongs to the RecX family.

The protein localises to the cytoplasm. Modulates RecA activity. This is Regulatory protein RecX from Streptococcus pneumoniae (strain P1031).